Consider the following 549-residue polypeptide: Ankyrin repeat domain-containing protein SOWAHA (549 aa).

A signal peptide spans 1-17; that stretch reads MALAAAAAAAAAGVSQA. 2 disordered regions span residues 82-219 and 235-256; these read KPRP…PCML and EEPG…PLLL. Over residues 203–216 the composition is skewed to low complexity; the sequence is PGPGAAKGPPQQKP. Basic and acidic residues predominate over residues 235-248; it reads EEPGLRRQLSEEPS. Ser-260 bears the Phosphoserine mark. ANK repeat units lie at residues 345–374 and 384–414; these read SGFT…RSGA and GGYT…QVHV. Residues 513–549 form a disordered region; that stretch reads PRKKTKIRGGLPAFSEISRRPTPGPLAGLVPSLPPTT.

It belongs to the SOWAH family.

The polypeptide is Ankyrin repeat domain-containing protein SOWAHA (SOWAHA) (Homo sapiens (Human)).